Reading from the N-terminus, the 186-residue chain is Pyridoxal 5'-phosphate synthase subunit PdxT (186 aa).

47–49 (GES) contributes to the L-glutamine binding site. C79 serves as the catalytic Nucleophile. Residues R106 and 134–135 (IR) each bind L-glutamine. Active-site charge relay system residues include H170 and E172.

Belongs to the glutaminase PdxT/SNO family. In terms of assembly, in the presence of PdxS, forms a dodecamer of heterodimers. Only shows activity in the heterodimer.

The enzyme catalyses aldehydo-D-ribose 5-phosphate + D-glyceraldehyde 3-phosphate + L-glutamine = pyridoxal 5'-phosphate + L-glutamate + phosphate + 3 H2O + H(+). The catalysed reaction is L-glutamine + H2O = L-glutamate + NH4(+). It functions in the pathway cofactor biosynthesis; pyridoxal 5'-phosphate biosynthesis. Its function is as follows. Catalyzes the hydrolysis of glutamine to glutamate and ammonia as part of the biosynthesis of pyridoxal 5'-phosphate. The resulting ammonia molecule is channeled to the active site of PdxS. The sequence is that of Pyridoxal 5'-phosphate synthase subunit PdxT from Methanothrix thermoacetophila (strain DSM 6194 / JCM 14653 / NBRC 101360 / PT) (Methanosaeta thermophila).